Reading from the N-terminus, the 243-residue chain is Probable fructoselysine utilization operon transcriptional repressor (243 aa).

The HTH gntR-type domain occupies glutamine 10–glutamine 78. Residues glutamate 38–serine 57 constitute a DNA-binding region (H-T-H motif).

It functions in the pathway carbohydrate metabolism; fructoselysine degradation [regulation]. In terms of biological role, may regulate the transcription of the frlABCDR operon, involved in the utilization of fructoselysine and psicoselysine. The sequence is that of Probable fructoselysine utilization operon transcriptional repressor (frlR) from Shigella flexneri.